Consider the following 703-residue polypeptide: Glycine--tRNA ligase beta subunit (703 aa).

This sequence belongs to the class-II aminoacyl-tRNA synthetase family. Tetramer of two alpha and two beta subunits.

It localises to the cytoplasm. It carries out the reaction tRNA(Gly) + glycine + ATP = glycyl-tRNA(Gly) + AMP + diphosphate. The polypeptide is Glycine--tRNA ligase beta subunit (Myxococcus xanthus (strain DK1622)).